We begin with the raw amino-acid sequence, 423 residues long: MSYVIDRRLNGKNKSTVNRQRFLRRYRDHIKKAVEEAVSRRSITDMEHGEQISIPGRDIDEPVLHHGRGGKQTVVHPGNKEFTTGEHIARPQGGGGGKGPGKAGNSGEGMDEFSFQITQEEFLEFMFEDLELPNLVKRNLTGTDTFKTVRAGISNEGNPSRINIIRTLRSAHARRIALSGSSRAKLKEATVELERMKREEPDNFGDIQELEVEIDRLKARIRRVPYLDTFDLKYNLLVKQPNPSSKAVMFCLMDVSGSMTQATKDIAKRFFILLYLFLKRNYDKIDVVFIRHHTSAREVDEEEFFYSRETGGTIVSSALKLMQEIMAERYPSSDWNIYAAQASDGDNWNDDSPICREILTKQIMPFVQYYTYVEITPREHQALWYEYERIGEDYADTFAQQQLVSAGDIYPVFRELFQRRLVS.

The disordered stretch occupies residues 65-110 (HHGRGGKQTVVHPGNKEFTTGEHIARPQGGGGGKGPGKAGNSGEGM). The segment covering 92 to 107 (QGGGGGKGPGKAGNSG) has biased composition (gly residues).

The protein belongs to the UPF0229 family.

This Pseudomonas savastanoi pv. phaseolicola (strain 1448A / Race 6) (Pseudomonas syringae pv. phaseolicola (strain 1448A / Race 6)) protein is UPF0229 protein PSPPH_0628.